The sequence spans 829 residues: Colorectal mutant cancer protein (829 aa).

Disordered regions lie at residues Arg-114–Ser-139, Thr-282–Asp-320, and Glu-672–Ala-700. A compositionally biased stretch (basic and acidic residues) spans Glu-123–Asp-132. The span at Gln-285–Leu-312 shows a compositional bias: polar residues. Basic and acidic residues predominate over residues Ser-689 to Ala-698. Positions Lys-766 to Lys-782 match the Nuclear localization signal motif. A PDZ-binding motif is present at residues Glu-826–Leu-829. A Phosphoserine modification is found at Ser-828.

Belongs to the MCC family. Interacts with SCRIB (via phosphorylated PDZ-binding motif), EZR, SNX27, NHERF1 and NHERF2. Interacts with CTNNB1; the interaction is enhanced upon Wnt stimulation. Interacts with MYH10. Interacts with CCAR2. Expressed in a variety of tissues.

Its subcellular location is the cell membrane. The protein localises to the cell projection. The protein resides in the lamellipodium. It localises to the nucleus. It is found in the cytoplasm. Functionally, candidate for the putative colorectal tumor suppressor gene located at 5q21. Suppresses cell proliferation and the Wnt/b-catenin pathway in colorectal cancer cells. Inhibits DNA binding of b-catenin/TCF/LEF transcription factors. Involved in cell migration independently of RAC1, CDC42 and p21-activated kinase (PAK) activation. Represses the beta-catenin pathway (canonical Wnt signaling pathway) in a CCAR2-dependent manner by sequestering CCAR2 to the cytoplasm, thereby impairing its ability to inhibit SIRT1 which is involved in the deacetylation and negative regulation of beta-catenin (CTNB1) transcriptional activity. This is Colorectal mutant cancer protein (MCC) from Homo sapiens (Human).